The following is an 863-amino-acid chain: Potassium/sodium hyperpolarization-activated cyclic nucleotide-gated channel 2 (863 aa).

Residues 1–10 (MDARGGGGRP) show a composition bias toward gly residues. The segment at 1 to 131 (MDARGGGGRP…AGPAGEPRGS (131 aa)) is disordered. Over 1 to 188 (MDARGGGGRP…PYSDFRFYWD (188 aa)) the chain is Cytoplasmic. The segment covering 17 to 47 (TPAPGPPPPPPPPAPPQPQPPPAPPPNPTTP) has biased composition (pro residues). Over residues 106–128 (GAASGPAAAEEAGSEEAGPAGEP) the composition is skewed to low complexity. 2 positions are modified to phosphoserine: Ser-119 and Ser-134. The interval 131–182 (SQASFLQRQFGALLQPGVNKFSLRMFGSQKAVEREQERVKSAGAWIIHPYSD) is involved in subunit assembly. Residues 189-209 (FTMLLFMVGNLIIIPVGITFF) traverse the membrane as a helical segment. Residues 210–213 (KDET) are Extracellular-facing. A helical transmembrane segment spans residues 214–234 (TAPWIVFNVVSDTFFLMDLVL). Residues 235–261 (NFRTGIVIEDNTEIILDPEKIKKKYLR) are Cytoplasmic-facing. The chain crosses the membrane as a helical span at residues 262 to 282 (TWFVVDFVSSIPVDYIFLIVE). Topologically, residues 283-290 (KGIDSEVY) are extracellular. A helical; Voltage-sensor transmembrane segment spans residues 291-311 (KTARALRIVRFTKILSLLRLL). At 312–342 (RLSRLIRYIHQWEEIFHMTYDLASAVMRICN) the chain is on the cytoplasmic side. The chain crosses the membrane as a helical span at residues 343–363 (LISMMLLLCHWDGCLQFLVPM). The Extracellular segment spans residues 364–386 (LQDFPSDCWVSINNMVNHSWSEL). Asn-380 carries an N-linked (GlcNAc...) asparagine glycan. Positions 387–408 (YSFALFKAMSHMLCIGYGRQAP) form an intramembrane region, pore-forming. Over 409–413 (ESMTD) the chain is Extracellular. A helical membrane pass occupies residues 414–434 (IWLTMLSMIVGATCYAMFIGH). Over 435 to 863 (ATALIQSLDS…SARSRLSSNL (429 aa)) the chain is Cytoplasmic. The 3',5'-cyclic AMP site is built by Gly-581, Glu-582, Cys-584, Arg-591, Thr-592, and Arg-632. Ser-641 carries the phosphoserine; by PKG/PRKG2 modification. Position 726 is a phosphoserine (Ser-726). An Omega-N-methylarginine modification is found at Arg-728. The tract at residues 730-863 (VRRAPPGPLP…SARSRLSSNL (134 aa)) is disordered. Residues 734–755 (PPGPLPPAASPGPPAASPPAAP) are compositionally biased toward pro residues. A phosphoserine mark is found at Ser-743, Ser-750, and Ser-757. Composition is skewed to low complexity over residues 756 to 765 (SSPRAPRTSP) and 778 to 834 (PALP…AAPS). Ser-840, Ser-842, and Ser-847 each carry phosphoserine.

It belongs to the potassium channel HCN family. Homotetramer. The channel is composed of a homo- or heterotetrameric complex of pore-forming subunits. Heterotetramer with HCN1. Forms an obligate 4:4 complex with accessory subunit PEX5L. Interacts with KCNE2. Post-translationally, phosphorylation at Ser-641 by PRKG2 shifts the voltage-dependence to more negative voltages, hence counteracting the stimulatory effect of cGMP on gating. In terms of processing, N-glycosylated; required for cell surface trafficking of HCN2. S-palmitoylated. As to expression, highly expressed in neonatal and adult ventricle and in brain. Highly expressed in the pyramidal layer in hippocampus, in anterior dorsal nucleus in thalamus, in the mammillary nucleus in hypothalamus, in red nucleus, in trigeminal mesencephalic, spinal and principal nuclei, in cochlear and trapezoid nuclei and in the dorsal tegemental nucleus.

The protein localises to the cell membrane. It catalyses the reaction Na(+)(in) = Na(+)(out). The catalysed reaction is K(+)(in) = K(+)(out). It carries out the reaction NH4(+)(in) = NH4(+)(out). Activated by cAMP, and at 10-100 times higher concentrations, also by cGMP. cAMP binding causes a conformation change that leads to the assembly of an active tetramer and channel opening. In the absence of cAMP, the C-terminal region is thought to exert a tonic inhibition on the pore when HCN2 is in a non-tetrameric form. Channel activity is modulated by intracellular chloride ions and pH; acidic pH shifts the activation to more negative voltages. Phosphatidylinositol-4,5- bisphosphate (PIP(2)) acts as a ligand that allosterically opens HCN2 by shifting voltage-dependent channel activation toward depolarized potentials. Inhibited by extracellular cesium ions. Hyperpolarization-activated ion channel exhibiting weak selectivity for potassium over sodium ions. Contributes to the native pacemaker currents in heart (If) and in neurons (Ih). Can also transport ammonium in the distal nephron. Involved in the initiation of neuropathic pain in sensory neurons. Produces a large instantaneous current. This is Potassium/sodium hyperpolarization-activated cyclic nucleotide-gated channel 2 (Hcn2) from Rattus norvegicus (Rat).